The chain runs to 188 residues: MGGGWWWARAARLARLRFRGALLPPPRPRSGGARGSFAPGHGPRAGASPPPVSELDRADAWLLRKAHETAFLSWFRNGLLASGIGVISFMQSDMGREAAYGFFLLGGLCVVWGGASYVVGLAALRGPMQLSVGGAAAGVGAVLAAGLLWACAVGLYMGQLELDVELVPEDDGTTAAEGPDEAGRPPPE.

A mitochondrion-targeting transit peptide spans 1–96; sequence MGGGWWWARA…ISFMQSDMGR (96 aa). Residues 25–52 are disordered; it reads PPRPRSGGARGSFAPGHGPRAGASPPPV. Low complexity predominate over residues 29-38; it reads RSGGARGSFA. Serine 48 carries the post-translational modification Phosphoserine. 2 helical membrane passes run 102 to 122 and 135 to 155; these read FFLL…VGLA and AAAG…AVGL.

The protein belongs to the TMEM160 family.

Its subcellular location is the mitochondrion inner membrane. The polypeptide is Transmembrane protein 160 (Bos taurus (Bovine)).